Consider the following 153-residue polypeptide: Small ribosomal subunit protein uS13 (153 aa).

The tract at residues 134–153 (GQRTKSNGRRGRSMGVSRKK) is disordered.

Belongs to the universal ribosomal protein uS13 family.

The protein localises to the cytoplasm. In terms of biological role, located at the top of the head of the 40S subunit, it contacts several helices of the 18S rRNA. In Encephalitozoon cuniculi (strain GB-M1) (Microsporidian parasite), this protein is Small ribosomal subunit protein uS13 (RPS18).